Consider the following 642-residue polypeptide: Bifunctional protein glk (642 aa).

Residues Met1–Ser340 form a glucokinase region. Ala23–Thr28 provides a ligand contact to ATP. The 77-residue stretch at Ser341–Thr417 folds into the HTH rpiR-type domain. A putative HTH-type transcriptional regulator region spans residues Ser341–Asp642. Residues Ile377 to Arg396 constitute a DNA-binding region (H-T-H motif). The 140-residue stretch at Ala461–Ser600 folds into the SIS domain. A helical transmembrane segment spans residues Ser576–Ile596.

It in the N-terminal section; belongs to the bacterial glucokinase family.

The protein resides in the membrane. The enzyme catalyses D-glucose + ATP = D-glucose 6-phosphate + ADP + H(+). This Burkholderia orbicola (strain AU 1054) protein is Bifunctional protein glk (glk).